The following is a 134-amino-acid chain: Beta-synuclein (134 aa).

2 consecutive repeat copies span residues glutamate 20–alanine 30 and glutamate 31–glycine 41. Residues glutamate 20–glycine 67 form a 4 X 11 AA tandem repeats of [EGS]-K-T-K-[EQ]-[GQ]-V-X(4) region. One copy of the 3; approximate repeat lies at serine 42 to alanine 56. The stretch at glutamate 57–glycine 67 is repeat 4. Residues phenylalanine 89–alanine 134 form a disordered region. Positions valine 98–alanine 134 are enriched in acidic residues. Serine 118 carries the phosphoserine; by BARK1, CK2 and GRK5 modification.

This sequence belongs to the synuclein family. Post-translationally, phosphorylated. Phosphorylation by G-protein coupled receptor kinases (GRK) is more efficient than phosphorylation by CK1, CK2 and CaM-kinase II. Expressed predominantly in brain; concentrated in presynaptic nerve terminals.

It is found in the cytoplasm. Non-amyloid component of senile plaques found in Alzheimer disease. Could act as a regulator of SNCA aggregation process. Protects neurons from staurosporine and 6-hydroxy dopamine (6OHDA)-stimulated caspase activation in a p53/TP53-dependent manner. Contributes to restore the SNCA anti-apoptotic function abolished by 6OHDA. Not found in the Lewy bodies associated with Parkinson disease. In Homo sapiens (Human), this protein is Beta-synuclein (SNCB).